We begin with the raw amino-acid sequence, 194 residues long: MTLFLRIFTFGCLLLLAGCTTTQPQRDQVNWQKERTRLEQLSHWQLSGKMAIITVQQKGSARVNWQQNGDDYRLNLTSLIGTHILELSRSNGEITLIDNEGNPHQSQDAEALIYQLTGWNIPVQGLPEWIKGLPGKAEFELNPDSSLASVRDGQWQIVYGDYRDQDGYRLPHLLTMTGQGSRLKLQINQWTLAR.

A signal peptide spans 1–18 (MTLFLRIFTFGCLLLLAG). The N-palmitoyl cysteine moiety is linked to residue Cys-19. Cys-19 is lipidated: S-diacylglycerol cysteine.

The protein belongs to the LolB family. As to quaternary structure, monomer.

The protein localises to the cell outer membrane. Its function is as follows. Plays a critical role in the incorporation of lipoproteins in the outer membrane after they are released by the LolA protein. The protein is Outer-membrane lipoprotein LolB of Aeromonas salmonicida (strain A449).